Here is a 1020-residue protein sequence, read N- to C-terminus: Glycine dehydrogenase (decarboxylating), mitochondrial (1020 aa).

A mitochondrion-targeting transit peptide spans 1–35 (MQSCARAWGLRLGRGVGGGRRLAGGSGPCWAPRSR). Residues 21–46 (RLAGGSGPCWAPRSRDSSSGGGDSAA) form a disordered region. Lys-447, Lys-514, Lys-648, and Lys-664 each carry N6-acetyllysine. At Lys-754 the chain carries N6-(pyridoxal phosphate)lysine.

This sequence belongs to the GcvP family. In terms of assembly, homodimer. Interacts with GCSH. The glycine cleavage system is composed of four proteins: P (GLDC), T (GCST), L (DLD) and H (GCSH). Pyridoxal 5'-phosphate serves as cofactor.

It is found in the mitochondrion. It carries out the reaction N(6)-[(R)-lipoyl]-L-lysyl-[glycine-cleavage complex H protein] + glycine + H(+) = N(6)-[(R)-S(8)-aminomethyldihydrolipoyl]-L-lysyl-[glycine-cleavage complex H protein] + CO2. Stimulated by lipoic acid. Inhibited in presence of methylamine. The glycine cleavage system catalyzes the degradation of glycine. The P protein (GLDC) binds the alpha-amino group of glycine through its pyridoxal phosphate cofactor; CO(2) is released and the remaining methylamine moiety is then transferred to the lipoamide cofactor of the H protein (GCSH). This Homo sapiens (Human) protein is Glycine dehydrogenase (decarboxylating), mitochondrial.